A 235-amino-acid polypeptide reads, in one-letter code: Large ribosomal subunit protein uL1 (235 aa).

This sequence belongs to the universal ribosomal protein uL1 family. As to quaternary structure, part of the 50S ribosomal subunit.

Functionally, binds directly to 23S rRNA. The L1 stalk is quite mobile in the ribosome, and is involved in E site tRNA release. In terms of biological role, protein L1 is also a translational repressor protein, it controls the translation of the L11 operon by binding to its mRNA. This chain is Large ribosomal subunit protein uL1, found in Mycolicibacterium paratuberculosis (strain ATCC BAA-968 / K-10) (Mycobacterium paratuberculosis).